A 408-amino-acid chain; its full sequence is Myb/SANT-like DNA-binding domain-containing protein 4 (408 aa).

Positions 4-77 (LKRKRKSNFS…EVKRRYLDWR (74 aa)) constitute a Myb-like domain. Residues 236–367 (HLLVTLEKQK…IEKERLQDAL (132 aa)) adopt a coiled-coil conformation.

The protein is Myb/SANT-like DNA-binding domain-containing protein 4 (msantd4) of Xenopus tropicalis (Western clawed frog).